The chain runs to 459 residues: Zinc finger chaperone zpr1 (459 aa).

2 C4-type zinc fingers span residues 38-70 (CMEC…CPHC) and 259-291 (CPSC…CDRC).

The protein belongs to the ZPR1 family.

Its subcellular location is the cytoplasm. The protein localises to the nucleus. Its function is as follows. Acts as a protein folding chaperone for elongation factor 1-alpha. This Schizosaccharomyces pombe (strain 972 / ATCC 24843) (Fission yeast) protein is Zinc finger chaperone zpr1.